An 84-amino-acid polypeptide reads, in one-letter code: U21-theraphotoxin-Cg1b (84 aa).

The signal sequence occupies residues 1 to 21 (MKVSVLITLAVLGVMFLLTSA). Residues 22–47 (EERGSDQMDSPAWLKSMERIFQSEER) constitute a propeptide that is removed on maturation. Cystine bridges form between C49–C63, C56–C68, and C62–C76. F82 is modified (phenylalanine amide).

It belongs to the neurotoxin 10 (Hwtx-1) family. 05 (F4a) subfamily. In terms of tissue distribution, expressed by the venom gland.

It is found in the secreted. Functionally, probable ion channel inhibitor. This chain is U21-theraphotoxin-Cg1b, found in Chilobrachys guangxiensis (Chinese earth tiger tarantula).